The sequence spans 1167 residues: ATP-dependent helicase/deoxyribonuclease subunit B (1167 aa).

A UvrD-like helicase ATP-binding domain is found at M1–L359. G8–T15 lines the ATP pocket. Residues A282–D588 form the UvrD-like helicase C-terminal domain. Positions 804, 1126, 1129, and 1135 each coordinate [4Fe-4S] cluster.

It belongs to the helicase family. AddB/RexB type 1 subfamily. In terms of assembly, heterodimer of AddA and AddB. Requires Mg(2+) as cofactor. It depends on [4Fe-4S] cluster as a cofactor.

Functionally, the heterodimer acts as both an ATP-dependent DNA helicase and an ATP-dependent, dual-direction single-stranded exonuclease. Recognizes the chi site generating a DNA molecule suitable for the initiation of homologous recombination. The AddB subunit has 5' -&gt; 3' nuclease activity but not helicase activity. The chain is ATP-dependent helicase/deoxyribonuclease subunit B from Geobacillus kaustophilus (strain HTA426).